The sequence spans 431 residues: MKNYIEIVDVYARQILDSRCNPTVEVEVELEDGTVGVAAVPSGASTGAFEAVELRDGDESKYLGKGVLKAVDNVNTIIADELVGMNVLDQVAIDKTMIELDGTDNKAKLGANAMLGVSLACAKAAANFLGMSLYQYIGGVNAKVLPVPMMNIINGGKHADNNVDLQEFMIMPAGAPSFSEALRMCSEVYHALKSTLKSQGYDTGVGDEGGFAPNLKSNEEAIVVIIEAIKKAGYTPGKDIFIALDPASSEIFEDGKYNLAGEGRVLTPEEMANYYVELAEKYPIISIEDGMAEEDWDGWKILTEKIGDKVQLVGDDLFVTNTERLAKGIKLGVANSILIKLNQIGTLTETLNAIEMAERAGYTAVVSHRSGETEDTTIADLVVAVNAGQIKTGAPARSERVAKYNQLLRIEEELNDMGEYRGLKAFYNINK.

(2R)-2-phosphoglycerate is bound at residue Q166. The active-site Proton donor is the E208. Residues D245, E288, and D315 each contribute to the Mg(2+) site. Positions 340, 369, 370, and 391 each coordinate (2R)-2-phosphoglycerate. K340 acts as the Proton acceptor in catalysis.

This sequence belongs to the enolase family. Requires Mg(2+) as cofactor.

Its subcellular location is the cytoplasm. The protein localises to the secreted. It is found in the cell surface. The catalysed reaction is (2R)-2-phosphoglycerate = phosphoenolpyruvate + H2O. The protein operates within carbohydrate degradation; glycolysis; pyruvate from D-glyceraldehyde 3-phosphate: step 4/5. Its function is as follows. Catalyzes the reversible conversion of 2-phosphoglycerate (2-PG) into phosphoenolpyruvate (PEP). It is essential for the degradation of carbohydrates via glycolysis. This chain is Enolase, found in Clostridium botulinum (strain Loch Maree / Type A3).